Here is a 752-residue protein sequence, read N- to C-terminus: ATP-dependent RNA helicase DRS1 (752 aa).

2 disordered regions span residues 1–61 (MVVG…NLDE) and 119–223 (GLVK…TEGD). Over residues 19-34 (DSEDDVPILDSSDDEK) the composition is skewed to acidic residues. A compositionally biased stretch (basic residues) spans 40-51 (TTKKRKGKNNKK). Residues 124–142 (AHIDSKQEEETEKEKVEKE) are compositionally biased toward basic and acidic residues. Acidic residues-rich tracts occupy residues 167 to 191 (NQSEEEEEEEEKEEEEEEEEEQEEM) and 200 to 209 (DEIDEEDDSE). Serine 208 is subject to Phosphoserine. Positions 231-259 (ENFNSLSLSRPVLKGLASLGYVKPSPIQS) match the Q motif motif. Residues 262-437 (IPIALLGKDI…SLSLKKPVRI (176 aa)) form the Helicase ATP-binding domain. 275–282 (AVTGSGKT) is a binding site for ATP. The short motif at 385–388 (DEAD) is the DEAD box element. One can recognise a Helicase C-terminal domain in the interval 448-639 (KLTQEFVRIR…SMNDTIEDIL (192 aa)). Residues 621–667 (IEETNKLVESMNDTIEDILVEEKEEKEILRAEMQLRKGENMLKHKKE) adopt a coiled-coil conformation. A disordered region spans residues 673–752 (RRTWFQSESD…NKKKGFKSRR (80 aa)). The segment covering 694–705 (RNKKVTNSKKRK) has biased composition (basic residues). Residues 722–734 (TKTDRIADQERTF) show a composition bias toward basic and acidic residues. The span at 735-752 (KKQKSTNSNKKKGFKSRR) shows a compositional bias: basic residues.

This sequence belongs to the DEAD box helicase family. DDX27/DRS1 subfamily. In terms of assembly, interacts with RRP1 and associates with pre-ribosomal particles.

It is found in the nucleus. It localises to the nucleolus. It carries out the reaction ATP + H2O = ADP + phosphate + H(+). ATP-binding RNA helicase involved in ribosome assembly. The chain is ATP-dependent RNA helicase DRS1 (DRS1) from Saccharomyces cerevisiae (strain ATCC 204508 / S288c) (Baker's yeast).